A 48-amino-acid polypeptide reads, in one-letter code: uncharacterized protein (48 aa).

The tract at residues 1–48 (MTKIPINIPATSGKIKFGITPSSNKSPSLSPSPSNGQLGGGRGYILEP) is disordered. Positions 21 to 36 (PSSNKSPSLSPSPSNG) are enriched in low complexity. Residues 37 to 48 (QLGGGRGYILEP) show a composition bias toward gly residues.

This is an uncharacterized protein from Dictyostelium discoideum (Social amoeba).